Here is a 405-residue protein sequence, read N- to C-terminus: Glucose-1-phosphate adenylyltransferase 1 (405 aa).

Alpha-D-glucose 1-phosphate contacts are provided by residues Tyr96, Gly161, Glu176–Lys177, and Ser194.

The protein belongs to the bacterial/plant glucose-1-phosphate adenylyltransferase family. In terms of assembly, homotetramer.

The catalysed reaction is alpha-D-glucose 1-phosphate + ATP + H(+) = ADP-alpha-D-glucose + diphosphate. It participates in glycan biosynthesis; glycogen biosynthesis. Functionally, involved in the biosynthesis of ADP-glucose, a building block required for the elongation reactions to produce glycogen. Catalyzes the reaction between ATP and alpha-D-glucose 1-phosphate (G1P) to produce pyrophosphate and ADP-Glc. This is Glucose-1-phosphate adenylyltransferase 1 from Vibrio parahaemolyticus serotype O3:K6 (strain RIMD 2210633).